Reading from the N-terminus, the 317-residue chain is MATH domain and coiled-coil domain-containing protein At3g58240 (317 aa).

The 126-residue stretch at 6 to 131 (DNKFTWVIKN…DGEVEIVAQI (126 aa)) folds into the MATH domain. Residues 254 to 305 (KLDWLEKKLDEVKEIKKKCERVTEMEKELHDLMNKHTNVSKLLEKEKLEIKN) adopt a coiled-coil conformation.

In Arabidopsis thaliana (Mouse-ear cress), this protein is MATH domain and coiled-coil domain-containing protein At3g58240.